The sequence spans 462 residues: MAKNDKINFSTPSGFPEFLPSEKRLELYLLDTIRRVYESYGFTPIETPAVERLEVLQAKGNQGDNIIYGLEPILPPNRQAEKDKSGDTGSEARALKFDQTVPLAAYIARHLNDLTFPFARYQMDVVFRGERAKDGRFRQFRQCDIDVVGREKLSLLYDAQMPAIITEIFEAVNIGDFVIRINNRKVLTGFFQSLNISETQIKSCISIIDNLEKIGEAKVKLELEKEGINPEQTQKIIDFVKIDGSVDDVLDKLKHLSQTLPESEQFNLGVSELETVITGVRNLGVPDKRFCIDLAIARGLNYYTGTVYETTLIGHEALGSICSGGRYEELVGTFIGEKMPGVGISIGLTRLISRLLKAGILNTLPPTPAQVVVVNMQDELMPTYLKVSQQLRQAGLNVITNFEKRQLGKQFQAADKQGIRFCVIIGADEAAAQKSSLKDLQSGEQVEVALADLAEEIKRRLT.

This sequence belongs to the class-II aminoacyl-tRNA synthetase family. As to quaternary structure, homodimer.

Its subcellular location is the cytoplasm. It carries out the reaction tRNA(His) + L-histidine + ATP = L-histidyl-tRNA(His) + AMP + diphosphate + H(+). The polypeptide is Histidine--tRNA ligase (hisS) (Nostoc sp. (strain PCC 7120 / SAG 25.82 / UTEX 2576)).